The chain runs to 87 residues: Cell division topological specificity factor (87 aa).

This sequence belongs to the MinE family.

Its function is as follows. Prevents the cell division inhibition by proteins MinC and MinD at internal division sites while permitting inhibition at polar sites. This ensures cell division at the proper site by restricting the formation of a division septum at the midpoint of the long axis of the cell. The polypeptide is Cell division topological specificity factor (Acidiphilium cryptum (strain JF-5)).